A 368-amino-acid chain; its full sequence is NAD(P)H-quinone oxidoreductase subunit 1, chloroplastic (368 aa).

6 helical membrane-spanning segments follow: residues 27 to 47 (FIWI…GVLV), 97 to 117 (WLFN…YLVI), 130 to 150 (IGVF…LMAG), 269 to 289 (SSLF…PFLL), 308 to 328 (IIIG…IAIM), and 348 to 368 (FLLP…AFLL).

This sequence belongs to the complex I subunit 1 family. As to quaternary structure, NDH is composed of at least 16 different subunits, 5 of which are encoded in the nucleus.

The protein resides in the plastid. Its subcellular location is the chloroplast thylakoid membrane. It carries out the reaction a plastoquinone + NADH + (n+1) H(+)(in) = a plastoquinol + NAD(+) + n H(+)(out). The catalysed reaction is a plastoquinone + NADPH + (n+1) H(+)(in) = a plastoquinol + NADP(+) + n H(+)(out). Its function is as follows. NDH shuttles electrons from NAD(P)H:plastoquinone, via FMN and iron-sulfur (Fe-S) centers, to quinones in the photosynthetic chain and possibly in a chloroplast respiratory chain. The immediate electron acceptor for the enzyme in this species is believed to be plastoquinone. Couples the redox reaction to proton translocation, and thus conserves the redox energy in a proton gradient. The sequence is that of NAD(P)H-quinone oxidoreductase subunit 1, chloroplastic from Physcomitrium patens (Spreading-leaved earth moss).